The chain runs to 539 residues: G protein-coupled receptor associated sorting protein 3 (539 aa).

The span at 1–10 shows a compositional bias: basic residues; the sequence is MTGSKNKARA. Disordered regions lie at residues 1-111 and 132-170; these read MTGS…DSWF and NSVA…EEEE. 2 stretches are compositionally biased toward basic and acidic residues: residues 66–80 and 88–106; these read VVAE…ESKA and FNHK…DKPS. Residues 132–146 show a composition bias toward polar residues; that stretch reads NSVAKCENKPSTSIQ.

This sequence belongs to the GPRASP family. In terms of assembly, homodimer.

It is found in the cytoplasm. It localises to the nucleus. Its function is as follows. Survival and differentiation promoting protein that plays a role in the regulation of neurosynaptogenesis. Induces phosphatase PP2A activity which results in APP dephosphorylation and inhibits BACE1-mediated processing of APP. The chain is G protein-coupled receptor associated sorting protein 3 (Gprasp3) from Rattus norvegicus (Rat).